We begin with the raw amino-acid sequence, 87 residues long: uncharacterized protein (87 aa).

A helical transmembrane segment spans residues 44–64; it reads DALYLAGSTIFTIVTTLVAWF.

This sequence belongs to the SPP1 holin family.

It is found in the membrane. This is an uncharacterized protein from Bacillus licheniformis.